A 398-amino-acid polypeptide reads, in one-letter code: Acetate kinase (398 aa).

Residue Asn7 coordinates Mg(2+). Lys14 is an ATP binding site. Residue Arg92 coordinates substrate. The active-site Proton donor/acceptor is Asp149. Residues 208–212 (HLGNG), 283–285 (DCR), and 331–335 (GIGEN) contribute to the ATP site. Glu385 contacts Mg(2+).

This sequence belongs to the acetokinase family. In terms of assembly, homodimer. Mg(2+) serves as cofactor. The cofactor is Mn(2+).

The protein resides in the cytoplasm. It carries out the reaction acetate + ATP = acetyl phosphate + ADP. The protein operates within metabolic intermediate biosynthesis; acetyl-CoA biosynthesis; acetyl-CoA from acetate: step 1/2. In terms of biological role, catalyzes the formation of acetyl phosphate from acetate and ATP. Can also catalyze the reverse reaction. The chain is Acetate kinase from Fusobacterium nucleatum subsp. nucleatum (strain ATCC 25586 / DSM 15643 / BCRC 10681 / CIP 101130 / JCM 8532 / KCTC 2640 / LMG 13131 / VPI 4355).